Reading from the N-terminus, the 220-residue chain is Ribosomal RNA small subunit methyltransferase G (220 aa).

Residues Gly82, Leu87, 105-107 (DST), 133-134 (VE), and Arg147 contribute to the S-adenosyl-L-methionine site.

This sequence belongs to the methyltransferase superfamily. RNA methyltransferase RsmG family.

The protein resides in the cytoplasm. Functionally, specifically methylates the N7 position of a guanine in 16S rRNA. This chain is Ribosomal RNA small subunit methyltransferase G, found in Chlorobium limicola (strain DSM 245 / NBRC 103803 / 6330).